A 625-amino-acid chain; its full sequence is Interleukin-1 receptor-associated kinase-like 2 (625 aa).

The 82-residue stretch at 13 to 94 folds into the Death domain; it reads LDDLCRNMDA…RAAQIILNWK (82 aa). The segment at 111 to 181 is disordered; the sequence is KPEKPLAASV…SSDSKDFSTS (71 aa). Ser144 bears the Phosphoserine mark. Over residues 169–181 the composition is skewed to polar residues; that stretch reads LPTSSDSKDFSTS. The Protein kinase domain maps to 210 to 489; it reads FNQNRKISQG…LCLRRRNTSL (280 aa). Residues 216 to 224, Lys237, and 337 to 340 contribute to the ATP site; these read ISQGTFADV and KSSN. Residues 510–540 form a disordered region; the sequence is LPWSGLSEGTGSSSNTPEETDDVDNSSLDAS. The span at 516 to 526 shows a compositional bias: polar residues; sequence SEGTGSSSNTP.

It belongs to the protein kinase superfamily. TKL Ser/Thr protein kinase family. Pelle subfamily. In terms of assembly, interacts with MYD88. IL-1 stimulation leads to the formation of a signaling complex which dissociates from the IL-1 receptor following the binding of PELI1. Expressed in spleen, thymus, prostate, lung, liver, skeletal muscle, kidney, pancreas and peripheral blood leukocytes.

Its function is as follows. Binds to the IL-1 type I receptor following IL-1 engagement, triggering intracellular signaling cascades leading to transcriptional up-regulation and mRNA stabilization. The protein is Interleukin-1 receptor-associated kinase-like 2 (IRAK2) of Homo sapiens (Human).